We begin with the raw amino-acid sequence, 258 residues long: Pimeloyl-[acyl-carrier protein] methyl ester esterase (258 aa).

The 225-residue stretch at 17–241 (VYLIHGWGAN…KAAHAPFLSH (225 aa)) folds into the AB hydrolase-1 domain. Substrate-binding positions include tryptophan 23, 83 to 84 (SL), and 145 to 149 (FLQLQ). Residue serine 83 is the Nucleophile of the active site. Active-site residues include aspartate 207 and histidine 235. Substrate is bound at residue histidine 235.

Belongs to the AB hydrolase superfamily. Carboxylesterase BioH family. As to quaternary structure, monomer.

The protein resides in the cytoplasm. The catalysed reaction is 6-carboxyhexanoyl-[ACP] methyl ester + H2O = 6-carboxyhexanoyl-[ACP] + methanol + H(+). The protein operates within cofactor biosynthesis; biotin biosynthesis. In terms of biological role, the physiological role of BioH is to remove the methyl group introduced by BioC when the pimeloyl moiety is complete. It allows to synthesize pimeloyl-ACP via the fatty acid synthetic pathway through the hydrolysis of the ester bonds of pimeloyl-ACP esters. The sequence is that of Pimeloyl-[acyl-carrier protein] methyl ester esterase from Neisseria meningitidis serogroup B (strain ATCC BAA-335 / MC58).